Reading from the N-terminus, the 172-residue chain is Shikimate kinase (172 aa).

11–16 (ASGKTE) provides a ligand contact to ATP. Thr15 contacts Mg(2+). The substrate site is built by Asp33, Arg57, and Gly80. Residue Arg120 coordinates ATP. Residue Arg142 participates in substrate binding.

The protein belongs to the shikimate kinase family. Monomer. Requires Mg(2+) as cofactor.

Its subcellular location is the cytoplasm. The enzyme catalyses shikimate + ATP = 3-phosphoshikimate + ADP + H(+). Its pathway is metabolic intermediate biosynthesis; chorismate biosynthesis; chorismate from D-erythrose 4-phosphate and phosphoenolpyruvate: step 5/7. In terms of biological role, catalyzes the specific phosphorylation of the 3-hydroxyl group of shikimic acid using ATP as a cosubstrate. The polypeptide is Shikimate kinase (Flavobacterium psychrophilum (strain ATCC 49511 / DSM 21280 / CIP 103535 / JIP02/86)).